A 137-amino-acid chain; its full sequence is MNAIDRVKKSRGINELAEQIEPLAQSMATLADEARQVMSQTQQASEAQAAEWLKAQRQTGAAWVELAKELREVAAEVSSAAQSARSASRGWHWKLWLTVMLASMMPTVVLLIASLLLLDLTPLTTEDGSIWLRLVAR.

As to quaternary structure, interacts with MobA and MobC to form the relaxosome.

Functionally, this protein is essential to promote the specific transfer of the plasmid in the presence of conjugative plasmids. In Escherichia coli, this protein is Mobilization protein B (mobB).